A 467-amino-acid chain; its full sequence is Glutamate--tRNA ligase (467 aa).

The short motif at 9–19 (PSPTGYLHIGG) is the 'HIGH' region element. Residues 237-241 (KLSKR) carry the 'KMSKS' region motif. Position 240 (Lys240) interacts with ATP.

This sequence belongs to the class-I aminoacyl-tRNA synthetase family. Glutamate--tRNA ligase type 1 subfamily. In terms of assembly, monomer.

The protein resides in the cytoplasm. The enzyme catalyses tRNA(Glu) + L-glutamate + ATP = L-glutamyl-tRNA(Glu) + AMP + diphosphate. Its function is as follows. Catalyzes the attachment of glutamate to tRNA(Glu) in a two-step reaction: glutamate is first activated by ATP to form Glu-AMP and then transferred to the acceptor end of tRNA(Glu). The polypeptide is Glutamate--tRNA ligase (Xanthomonas oryzae pv. oryzae (strain MAFF 311018)).